A 511-amino-acid polypeptide reads, in one-letter code: Glucose-6-phosphate 1-dehydrogenase (511 aa).

Residues 29–36 (GASGDLAK), R63, and K164 contribute to the NADP(+) site. D-glucose 6-phosphate is bound by residues K164, 194 to 198 (HYLGK), E232, and D251. H256 acts as the Proton acceptor in catalysis. Residue K347 participates in NADP(+) binding. Position 350 (K350) interacts with D-glucose 6-phosphate. NADP(+)-binding residues include K356, R360, and R382. Q384 contributes to the D-glucose 6-phosphate binding site. NADP(+) is bound by residues 390–392 (YIK), 410–412 (DLT), and R477.

The protein belongs to the glucose-6-phosphate dehydrogenase family.

It catalyses the reaction D-glucose 6-phosphate + NADP(+) = 6-phospho-D-glucono-1,5-lactone + NADPH + H(+). The protein operates within carbohydrate degradation; pentose phosphate pathway; D-ribulose 5-phosphate from D-glucose 6-phosphate (oxidative stage): step 1/3. Catalyzes the rate-limiting step of the oxidative pentose-phosphate pathway, which represents a route for the dissimilation of carbohydrates besides glycolysis. The main function of this enzyme is to provide reducing power (NADPH) and pentose phosphates for fatty acid and nucleic acid synthesis. The protein is Glucose-6-phosphate 1-dehydrogenase (gsdA) of Emericella nidulans (strain FGSC A4 / ATCC 38163 / CBS 112.46 / NRRL 194 / M139) (Aspergillus nidulans).